A 345-amino-acid polypeptide reads, in one-letter code: S-adenosylmethionine:tRNA ribosyltransferase-isomerase (345 aa).

The protein belongs to the QueA family. As to quaternary structure, monomer.

It is found in the cytoplasm. The catalysed reaction is 7-aminomethyl-7-carbaguanosine(34) in tRNA + S-adenosyl-L-methionine = epoxyqueuosine(34) in tRNA + adenine + L-methionine + 2 H(+). It functions in the pathway tRNA modification; tRNA-queuosine biosynthesis. Its function is as follows. Transfers and isomerizes the ribose moiety from AdoMet to the 7-aminomethyl group of 7-deazaguanine (preQ1-tRNA) to give epoxyqueuosine (oQ-tRNA). The sequence is that of S-adenosylmethionine:tRNA ribosyltransferase-isomerase from Alkalilimnicola ehrlichii (strain ATCC BAA-1101 / DSM 17681 / MLHE-1).